The chain runs to 254 residues: Capsid protein (254 aa).

Positions 1-12 (MRKYTRNTYTMS) are enriched in polar residues. A disordered region spans residues 1 to 38 (MRKYTRNTYTMSQKRKVNPQSAWPKKRRTSTTSRKYQW). The short motif at 10-35 (TMSQKRKVNPQSAWPKKRRTSTTSRK) is the Bipartite nuclear localization signal element.

It belongs to the geminiviridae capsid protein family. As to quaternary structure, homomultimer. Binds to single-stranded and double-stranded viral DNA. Interacts (via nuclear localization signal) with host importin alpha-1a.

The protein localises to the virion. Its subcellular location is the host nucleus. Its function is as follows. Encapsidates the viral genome into characteristic twinned ('geminate') particles. Binds the genomic viral ssDNA and shuttles it into and out of the cell nucleus. Plays a role in protection of the genome from degradation, virus acquisition and transmission by insect vectors, infectivity, and systemic movement. The CP of monopartite geminiviruses is absolutely essential for virus movement. The protein is Capsid protein of Beet curly top virus (strain California/Logan) (BCTV).